The following is a 503-amino-acid chain: Cytochrome P450 3A9 (503 aa).

Cys-442 serves as a coordination point for heme.

The protein belongs to the cytochrome P450 family. Heme is required as a cofactor. Mainly expressed in olfactory epithelium.

The protein resides in the endoplasmic reticulum membrane. It localises to the microsome membrane. The enzyme catalyses an organic molecule + reduced [NADPH--hemoprotein reductase] + O2 = an alcohol + oxidized [NADPH--hemoprotein reductase] + H2O + H(+). This isozyme seems to be implicated in olfaction. Active in the demethylation of erythromycin as well as benzphetamine. The sequence is that of Cytochrome P450 3A9 (Cyp3a9) from Rattus norvegicus (Rat).